The primary structure comprises 390 residues: MPEEHEHNFVVSQENWSLHRKGYQDQQRHSDKVKDAIKNNLPDLVSEENIIMSNGRDVVKIPIRSLDEYKIRYNYEKSKHVGQGDGESEVGDVVARDPNASQQGQQGQGNGKKAGDQPGTDFYESEVSIAEIEEALFQELELPNLKQKDEVEITTEKIEFNDVRKKGLMGNVDKKRTILTALKRNAREGKAQITPIYNDDLRFKTWNEIIKRDSKAVVIAMMDTSASMGTFEKYMARSFFFWMNRFLRTKYDTVEFEFIAHHTEAKVVSEEDFFSKGESGGTICSSAYHKALEVIDEKFNPRSYNIYPFHFSDGENISSDNATCIDLVHEIMEKSNMFGYGEVNGYNRYSTLMNAYKNIEDPKFKHYILKEKADVYHAMKSFFHKQPEKV.

A disordered region spans residues 99–121; it reads NASQQGQQGQGNGKKAGDQPGTD.

It belongs to the UPF0229 family.

This is UPF0229 protein OB2647 from Oceanobacillus iheyensis (strain DSM 14371 / CIP 107618 / JCM 11309 / KCTC 3954 / HTE831).